Reading from the N-terminus, the 218-residue chain is Sodium channel regulatory subunit beta-1 (218 aa).

Residues 1 to 18 form the signal peptide; that stretch reads MGTLLALVVGAVLVSSAW. At 19–157 the chain is on the extracellular side; that stretch reads GGCVEVDSET…DKANRDMASI (139 aa). Intrachain disulfides connect Cys21–Cys43 and Cys40–Cys121. Residues 22-150 enclose the Ig-like C2-type domain; that stretch reads VEVDSETEAV…KIHLEVVDKA (129 aa). N-linked (GlcNAc...) asparagine glycosylation is found at Asn93, Asn110, Asn114, and Asn135. A helical membrane pass occupies residues 158–179; it reads VSEIMMYVLIVVLTIWLVAEMV. Topologically, residues 180–218 are cytoplasmic; it reads YCYKKIAAATEAAAQENASEYLAITSESKENCTGVQVAE.

It belongs to the sodium channel auxiliary subunit SCN1B (TC 8.A.17) family. In terms of assembly, a voltage-gated sodium (Nav) channel consists of an ion-conducting pore-forming alpha subunit functional on its own that is regulated by one or more beta subunits. Interacts with SCN1A; regulatory subunit of SCN1A/Nav1.1. Interacts with SCN3A; regulatory subunit of SCN3A/Nav1.3. Interacts with SCN4A; regulatory subunit of SCN4A/Nav1.4. Interacts with SCN5A; regulatory subunit of SCN5A/Nav1.5. Interacts with SCN8A; regulatory subunit of SCN8A/Nav1.6. Interacts with SCN9A; regulatory subunit of SCN9A/Nav1.7. Interacts with SCN10A; regulatory subunit of SCN10A/Nav1.8. Interacts with NFASC. Interacts with TMEM65. As to expression, detected in brain (at protein level). Expressed in brain, heart, skeletal muscle and spinal cord.

It localises to the cell membrane. It is found in the perikaryon. Its subcellular location is the cell projection. The protein localises to the axon. In terms of biological role, regulatory subunit of multiple voltage-gated sodium (Nav) channels directly mediating the depolarization of excitable membranes. Navs, also called VGSCs (voltage-gated sodium channels) or VDSCs (voltage-dependent sodium channels), operate by switching between closed and open conformations depending on the voltage difference across the membrane. In the open conformation they allow Na(+) ions to selectively pass through the pore, along their electrochemical gradient. The influx of Na+ ions provokes membrane depolarization, initiating the propagation of electrical signals throughout cells and tissues. The accessory beta subunits participate in localization and functional modulation of the Nav channels. Modulates the activity of SCN1A/Nav1.1, SCN2A/Nav1.2, SCN3A/Nav1.3, SCN4A/Nav1.4, SCN5A/Nav1.5, SCN8A/Nav1.6, SCN9A/Nav1.7 and SCN10A/Nav1.8. This chain is Sodium channel regulatory subunit beta-1, found in Rattus norvegicus (Rat).